We begin with the raw amino-acid sequence, 238 residues long: Pyridoxine 5'-phosphate synthase (238 aa).

A 3-amino-2-oxopropyl phosphate-binding site is contributed by N6. Residue 8–9 coordinates 1-deoxy-D-xylulose 5-phosphate; it reads DH. 3-amino-2-oxopropyl phosphate is bound at residue R17. The active-site Proton acceptor is H42. Residues R44 and H49 each coordinate 1-deoxy-D-xylulose 5-phosphate. E69 serves as the catalytic Proton acceptor. T99 is a binding site for 1-deoxy-D-xylulose 5-phosphate. Residue H190 is the Proton donor of the active site. Residues G191 and 212-213 contribute to the 3-amino-2-oxopropyl phosphate site; that span reads GH.

The protein belongs to the PNP synthase family. Homooctamer; tetramer of dimers.

The protein resides in the cytoplasm. The catalysed reaction is 3-amino-2-oxopropyl phosphate + 1-deoxy-D-xylulose 5-phosphate = pyridoxine 5'-phosphate + phosphate + 2 H2O + H(+). Its pathway is cofactor biosynthesis; pyridoxine 5'-phosphate biosynthesis; pyridoxine 5'-phosphate from D-erythrose 4-phosphate: step 5/5. Its function is as follows. Catalyzes the complicated ring closure reaction between the two acyclic compounds 1-deoxy-D-xylulose-5-phosphate (DXP) and 3-amino-2-oxopropyl phosphate (1-amino-acetone-3-phosphate or AAP) to form pyridoxine 5'-phosphate (PNP) and inorganic phosphate. The polypeptide is Pyridoxine 5'-phosphate synthase (Chlorobium phaeobacteroides (strain BS1)).